The chain runs to 302 residues: Acetyl-coenzyme A carboxylase carboxyl transferase subunit beta (302 aa).

The CoA carboxyltransferase N-terminal domain maps to 25–294 (VWTKCDSCGQ…PHFDEAAPVS (270 aa)). Residues cysteine 29, cysteine 32, cysteine 48, and cysteine 51 each coordinate Zn(2+). The segment at 29–51 (CDSCGQVLYRAELERNLEVCPKC) adopts a C4-type zinc-finger fold. Residues 281–302 (NQPQPHFDEAAPVSEQENQADA) form a disordered region.

This sequence belongs to the AccD/PCCB family. As to quaternary structure, acetyl-CoA carboxylase is a heterohexamer composed of biotin carboxyl carrier protein (AccB), biotin carboxylase (AccC) and two subunits each of ACCase subunit alpha (AccA) and ACCase subunit beta (AccD). It depends on Zn(2+) as a cofactor.

The protein resides in the cytoplasm. The enzyme catalyses N(6)-carboxybiotinyl-L-lysyl-[protein] + acetyl-CoA = N(6)-biotinyl-L-lysyl-[protein] + malonyl-CoA. The protein operates within lipid metabolism; malonyl-CoA biosynthesis; malonyl-CoA from acetyl-CoA: step 1/1. Component of the acetyl coenzyme A carboxylase (ACC) complex. Biotin carboxylase (BC) catalyzes the carboxylation of biotin on its carrier protein (BCCP) and then the CO(2) group is transferred by the transcarboxylase to acetyl-CoA to form malonyl-CoA. The polypeptide is Acetyl-coenzyme A carboxylase carboxyl transferase subunit beta (Serratia proteamaculans (strain 568)).